We begin with the raw amino-acid sequence, 432 residues long: 3-phosphoshikimate 1-carboxyvinyltransferase (432 aa).

Residues Lys-21, Ser-22, and Arg-26 each contribute to the 3-phosphoshikimate site. Position 21 (Lys-21) interacts with phosphoenolpyruvate. Residues Gly-94 and Arg-122 each coordinate phosphoenolpyruvate. 3-phosphoshikimate is bound by residues Ser-168, Gln-170, Asp-317, and Lys-344. Gln-170 lines the phosphoenolpyruvate pocket. Asp-317 (proton acceptor) is an active-site residue. Positions 348 and 391 each coordinate phosphoenolpyruvate.

This sequence belongs to the EPSP synthase family. Monomer.

Its subcellular location is the cytoplasm. The enzyme catalyses 3-phosphoshikimate + phosphoenolpyruvate = 5-O-(1-carboxyvinyl)-3-phosphoshikimate + phosphate. It participates in metabolic intermediate biosynthesis; chorismate biosynthesis; chorismate from D-erythrose 4-phosphate and phosphoenolpyruvate: step 6/7. Functionally, catalyzes the transfer of the enolpyruvyl moiety of phosphoenolpyruvate (PEP) to the 5-hydroxyl of shikimate-3-phosphate (S3P) to produce enolpyruvyl shikimate-3-phosphate and inorganic phosphate. This is 3-phosphoshikimate 1-carboxyvinyltransferase from Petrotoga mobilis (strain DSM 10674 / SJ95).